The chain runs to 465 residues: Phosphomannomutase/phosphoglucomutase (465 aa).

Catalysis depends on S110, which acts as the Phosphoserine intermediate. 4 residues coordinate Mg(2+): S110, D244, D246, and D248. Positions 327, 329, and 331 each coordinate substrate.

This sequence belongs to the phosphohexose mutase family. Monomer. The cofactor is Mg(2+).

It catalyses the reaction alpha-D-mannose 1-phosphate = D-mannose 6-phosphate. The catalysed reaction is alpha-D-glucose 1-phosphate = alpha-D-glucose 6-phosphate. Its pathway is nucleotide-sugar biosynthesis; GDP-alpha-D-mannose biosynthesis; alpha-D-mannose 1-phosphate from D-fructose 6-phosphate: step 2/2. It functions in the pathway bacterial outer membrane biogenesis; lipopolysaccharide biosynthesis. In terms of biological role, the phosphomannomutase activity produces a precursor for alginate polymerization. The alginate layer causes a mucoid phenotype and provides a protective barrier against host immune defenses and antibiotics. Also involved in core-LPS biosynthesis due to its phosphoglucomutase activity. Essential for biofilm production. This is Phosphomannomutase/phosphoglucomutase (algC) from Pseudomonas syringae pv. tomato (strain ATCC BAA-871 / DC3000).